We begin with the raw amino-acid sequence, 66 residues long: Clarkitoxin-I-Mdum (66 aa).

4 disulfide bridges follow: Cys3–Cys24, Cys17–Cys42, Cys46–Cys59, and Cys60–Cys65.

In terms of tissue distribution, expressed by the venom gland.

It localises to the secreted. In terms of biological role, no toxicity is observed upon intravenous or intracerebroventricular injection into mice. Has no cytotoxic activity towards C2C12 cells at 100 ug/ml. This is Clarkitoxin-I-Mdum from Micrurus dumerilii (Coral snake).